An 80-amino-acid chain; its full sequence is Toxin Acra1 (80 aa).

Positions 1-22 are cleaved as a signal peptide; that stretch reads MMKLVLFSIIVILFSLIGSIHG. Residues 25–80 enclose the LCN-type CS-alpha/beta domain; sequence VPGNYPLDSSGNKYPCTVLGDNQSCIDVCKKHGVKYGYCYSFKCWCEFLEDKNVSI. 3 disulfide bridges follow: Cys-40-Cys-63, Cys-49-Cys-68, and Cys-53-Cys-70.

Expressed by the venom gland.

It localises to the secreted. Its function is as follows. Probable neurotoxin that inhibits ion channels. Is toxic to mice. Is about 2.8% of the total protein in the venom. The polypeptide is Toxin Acra1 (Androctonus crassicauda (Arabian fat-tailed scorpion)).